A 510-amino-acid polypeptide reads, in one-letter code: Beta-galactosidase (510 aa).

The active-site Proton donor is the Glu-210. Glu-414 serves as the catalytic Nucleophile.

Belongs to the glycosyl hydrolase 1 family.

The catalysed reaction is Hydrolysis of terminal non-reducing beta-D-galactose residues in beta-D-galactosides.. The protein is Beta-galactosidase of Pyrococcus woesei.